Reading from the N-terminus, the 129-residue chain is MARVTVEDCIDKVDNRFELVLLASHRARQISQGSSITVDRDNDKNPVVALREIADETLSPDDLKEDLIHSLQKHVEVDEPEPDPVTLAASAADGEDDDQPETVTFDQMSEEELLAGIEGLVPPEKNDDY.

The disordered stretch occupies residues 76–101 (EVDEPEPDPVTLAASAADGEDDDQPE).

This sequence belongs to the RNA polymerase subunit omega family. The RNAP catalytic core consists of 2 alpha, 1 beta, 1 beta' and 1 omega subunit. When a sigma factor is associated with the core the holoenzyme is formed, which can initiate transcription.

It carries out the reaction RNA(n) + a ribonucleoside 5'-triphosphate = RNA(n+1) + diphosphate. In terms of biological role, promotes RNA polymerase assembly. Latches the N- and C-terminal regions of the beta' subunit thereby facilitating its interaction with the beta and alpha subunits. The protein is DNA-directed RNA polymerase subunit omega of Agrobacterium fabrum (strain C58 / ATCC 33970) (Agrobacterium tumefaciens (strain C58)).